Reading from the N-terminus, the 227-residue chain is Homeobox protein HD-10 (227 aa).

Residues 30–89 (FVKHRKRTTKAQLKVLEETFETNIRPDANMRKKLGEQLGMTPRSVQVWFQNRRAKIKKLT) constitute a DNA-binding region (homeobox). Residues 88–115 (LTQKKMMQQENTDNTKGPDAAHGSSSPK) are disordered. Polar residues predominate over residues 92–102 (KMMQQENTDNT).

Its subcellular location is the nucleus. The sequence is that of Homeobox protein HD-10 (HD-10) from Encephalitozoon cuniculi (strain GB-M1) (Microsporidian parasite).